The primary structure comprises 497 residues: Lysine--tRNA ligase (497 aa).

Residues glutamate 409 and glutamate 416 each contribute to the Mg(2+) site.

This sequence belongs to the class-II aminoacyl-tRNA synthetase family. Homodimer. Mg(2+) serves as cofactor.

The protein localises to the cytoplasm. It carries out the reaction tRNA(Lys) + L-lysine + ATP = L-lysyl-tRNA(Lys) + AMP + diphosphate. In Streptococcus pyogenes serotype M6 (strain ATCC BAA-946 / MGAS10394), this protein is Lysine--tRNA ligase.